Here is a 247-residue protein sequence, read N- to C-terminus: 2,3-bisphosphoglycerate-dependent phosphoglycerate mutase (247 aa).

Substrate-binding positions include 8 to 15 (RHGESQWN), 21 to 22 (TG), Arg60, 87 to 90 (ERHY), Lys98, 114 to 115 (RR), and 183 to 184 (GN). His9 functions as the Tele-phosphohistidine intermediate in the catalytic mechanism. Residue Glu87 is the Proton donor/acceptor of the active site.

It belongs to the phosphoglycerate mutase family. BPG-dependent PGAM subfamily.

It catalyses the reaction (2R)-2-phosphoglycerate = (2R)-3-phosphoglycerate. It functions in the pathway carbohydrate degradation; glycolysis; pyruvate from D-glyceraldehyde 3-phosphate: step 3/5. Functionally, catalyzes the interconversion of 2-phosphoglycerate and 3-phosphoglycerate. This Chlorobaculum tepidum (strain ATCC 49652 / DSM 12025 / NBRC 103806 / TLS) (Chlorobium tepidum) protein is 2,3-bisphosphoglycerate-dependent phosphoglycerate mutase.